The following is a 460-amino-acid chain: RING finger protein DG17 (460 aa).

The RING-type zinc-finger motif lies at 27–67 (CPICFEFIYKKQIYQCKSGHHACKECWEKSLETKKECMTCK). 2 consecutive TRAF-type zinc fingers follow at residues 141–194 (SHLI…KKEL) and 196–253 (THYK…SELQ). Residues 269 to 294 (IEKLTNQVGQSKKTHDELLKKIEDLS) are a coiled coil. Residues 320 to 448 (GYRNKWIISN…DDKLIIEIYI (129 aa)) form the MATH domain.

Belongs to the TNF receptor-associated factor family. A subfamily.

The protein resides in the cytoplasm. Probable adapter protein and signal transducer that links members of the tumor necrosis factor receptor family to different signaling pathways by association with the receptor cytoplasmic domain and kinases. This is RING finger protein DG17 (zfaA) from Dictyostelium discoideum (Social amoeba).